A 269-amino-acid polypeptide reads, in one-letter code: Cytochrome c oxidase subunit 3 (269 aa).

A run of 7 helical transmembrane segments spans residues 21–41, 45–65, 90–110, 138–160, 167–187, 205–225, and 247–267; these read PWPM…GLTM, IGNM…SVFW, GFLL…WAYF, PLLN…HALI, ALSG…CQYI, FYAG…MLII, and ILYC…FYWW.

The protein belongs to the cytochrome c oxidase subunit 3 family. In terms of assembly, component of the cytochrome c oxidase (complex IV, CIV), a multisubunit enzyme composed of a catalytic core of 3 subunits and several supernumerary subunits. The complex exists as a monomer or a dimer and forms supercomplexes (SCs) in the inner mitochondrial membrane with ubiquinol-cytochrome c oxidoreductase (cytochrome b-c1 complex, complex III, CIII).

It localises to the mitochondrion inner membrane. It catalyses the reaction 4 Fe(II)-[cytochrome c] + O2 + 8 H(+)(in) = 4 Fe(III)-[cytochrome c] + 2 H2O + 4 H(+)(out). In terms of biological role, component of the cytochrome c oxidase, the last enzyme in the mitochondrial electron transport chain which drives oxidative phosphorylation. The respiratory chain contains 3 multisubunit complexes succinate dehydrogenase (complex II, CII), ubiquinol-cytochrome c oxidoreductase (cytochrome b-c1 complex, complex III, CIII) and cytochrome c oxidase (complex IV, CIV), that cooperate to transfer electrons derived from NADH and succinate to molecular oxygen, creating an electrochemical gradient over the inner membrane that drives transmembrane transport and the ATP synthase. Cytochrome c oxidase is the component of the respiratory chain that catalyzes the reduction of oxygen to water. Electrons originating from reduced cytochrome c in the intermembrane space (IMS) are transferred via the dinuclear copper A center (CU(A)) of subunit 2 and heme A of subunit 1 to the active site in subunit 1, a binuclear center (BNC) formed by heme A3 and copper B (CU(B)). The BNC reduces molecular oxygen to 2 water molecules using 4 electrons from cytochrome c in the IMS and 4 protons from the mitochondrial matrix. The sequence is that of Cytochrome c oxidase subunit 3 (COX3) from Candida glabrata (strain ATCC 2001 / BCRC 20586 / JCM 3761 / NBRC 0622 / NRRL Y-65 / CBS 138) (Yeast).